The chain runs to 240 residues: Lectin (240 aa).

The Mn(2+) site is built by Glu127 and Asp129. Ca(2+) contacts are provided by Asp129, Tyr131, Asn133, and Asp138. Mn(2+) contacts are provided by Asp138 and His143.

Belongs to the leguminous lectin family. As to quaternary structure, heterotetramer of two alpha and two beta chains; disulfide bond linked.

Binds preferentially to oligosaccharides bearing the sequence Man-alpha-1-&gt;2 Man-alpha-1-&gt;6 Man-alpha-1-&gt;6Man found in early steps of glycoprotein processing in the endoplasmic reticulum. It binds weakly to highly processed oligosaccharide structures. The chain is Lectin from Leucomphalos mildbraedii (Bowringia mildbraedii).